A 119-amino-acid polypeptide reads, in one-letter code: Large ribosomal subunit protein uL18 (119 aa).

Belongs to the universal ribosomal protein uL18 family. As to quaternary structure, part of the 50S ribosomal subunit; part of the 5S rRNA/L5/L18/L25 subcomplex. Contacts the 5S and 23S rRNAs.

Its function is as follows. This is one of the proteins that bind and probably mediate the attachment of the 5S RNA into the large ribosomal subunit, where it forms part of the central protuberance. The protein is Large ribosomal subunit protein uL18 of Clostridium perfringens (strain 13 / Type A).